Consider the following 258-residue polypeptide: Thiazole synthase (258 aa).

Catalysis depends on K100, which acts as the Schiff-base intermediate with DXP. 1-deoxy-D-xylulose 5-phosphate contacts are provided by residues G161, 187-188 (AG), and 209-210 (NT).

It belongs to the ThiG family. As to quaternary structure, homotetramer. Forms heterodimers with either ThiH or ThiS.

The protein localises to the cytoplasm. The enzyme catalyses [ThiS sulfur-carrier protein]-C-terminal-Gly-aminoethanethioate + 2-iminoacetate + 1-deoxy-D-xylulose 5-phosphate = [ThiS sulfur-carrier protein]-C-terminal Gly-Gly + 2-[(2R,5Z)-2-carboxy-4-methylthiazol-5(2H)-ylidene]ethyl phosphate + 2 H2O + H(+). It participates in cofactor biosynthesis; thiamine diphosphate biosynthesis. In terms of biological role, catalyzes the rearrangement of 1-deoxy-D-xylulose 5-phosphate (DXP) to produce the thiazole phosphate moiety of thiamine. Sulfur is provided by the thiocarboxylate moiety of the carrier protein ThiS. In vitro, sulfur can be provided by H(2)S. The protein is Thiazole synthase of Campylobacter jejuni subsp. jejuni serotype O:23/36 (strain 81-176).